The following is a 183-amino-acid chain: NADH-quinone oxidoreductase subunit A (183 aa).

3 consecutive transmembrane segments (helical) span residues 11 to 31 (IIAF…VPLL), 63 to 83 (FYLV…LYAW), and 98 to 118 (VVIF…VGAL). The segment at 159–183 (TGQIPAQSSGRVKSKTTPALSSEKE) is disordered.

The protein belongs to the complex I subunit 3 family. NDH-1 is composed of 14 different subunits. Subunits NuoA, H, J, K, L, M, N constitute the membrane sector of the complex.

The protein resides in the cell inner membrane. The enzyme catalyses a quinone + NADH + 5 H(+)(in) = a quinol + NAD(+) + 4 H(+)(out). In terms of biological role, NDH-1 shuttles electrons from NADH, via FMN and iron-sulfur (Fe-S) centers, to quinones in the respiratory chain. The immediate electron acceptor for the enzyme in this species is believed to be ubiquinone. Couples the redox reaction to proton translocation (for every two electrons transferred, four hydrogen ions are translocated across the cytoplasmic membrane), and thus conserves the redox energy in a proton gradient. This is NADH-quinone oxidoreductase subunit A from Acinetobacter baumannii (strain ACICU).